We begin with the raw amino-acid sequence, 258 residues long: Acyl-[acyl-carrier-protein]--UDP-N-acetylglucosamine O-acyltransferase (258 aa).

It belongs to the transferase hexapeptide repeat family. LpxA subfamily. Homotrimer.

The protein resides in the cytoplasm. The enzyme catalyses a (3R)-hydroxyacyl-[ACP] + UDP-N-acetyl-alpha-D-glucosamine = a UDP-3-O-[(3R)-3-hydroxyacyl]-N-acetyl-alpha-D-glucosamine + holo-[ACP]. It participates in glycolipid biosynthesis; lipid IV(A) biosynthesis; lipid IV(A) from (3R)-3-hydroxytetradecanoyl-[acyl-carrier-protein] and UDP-N-acetyl-alpha-D-glucosamine: step 1/6. Functionally, involved in the biosynthesis of lipid A, a phosphorylated glycolipid that anchors the lipopolysaccharide to the outer membrane of the cell. The chain is Acyl-[acyl-carrier-protein]--UDP-N-acetylglucosamine O-acyltransferase from Pseudomonas savastanoi pv. phaseolicola (strain 1448A / Race 6) (Pseudomonas syringae pv. phaseolicola (strain 1448A / Race 6)).